The following is a 486-amino-acid chain: Cysteine--tRNA ligase (486 aa).

Cysteine 29 provides a ligand contact to Zn(2+). Positions 31-41 match the 'HIGH' region motif; sequence ITVYDYCHLGH. Residues cysteine 215, histidine 240, and glutamate 244 each contribute to the Zn(2+) site. A 'KMSKS' region motif is present at residues 272 to 276; it reads KMSKS. Lysine 275 contributes to the ATP binding site.

This sequence belongs to the class-I aminoacyl-tRNA synthetase family. In terms of assembly, monomer. Requires Zn(2+) as cofactor.

Its subcellular location is the cytoplasm. The catalysed reaction is tRNA(Cys) + L-cysteine + ATP = L-cysteinyl-tRNA(Cys) + AMP + diphosphate. The polypeptide is Cysteine--tRNA ligase (Gloeothece citriformis (strain PCC 7424) (Cyanothece sp. (strain PCC 7424))).